The sequence spans 103 residues: Large ribosomal subunit protein uL24 (103 aa).

Belongs to the universal ribosomal protein uL24 family. In terms of assembly, part of the 50S ribosomal subunit.

In terms of biological role, one of two assembly initiator proteins, it binds directly to the 5'-end of the 23S rRNA, where it nucleates assembly of the 50S subunit. One of the proteins that surrounds the polypeptide exit tunnel on the outside of the subunit. This Listeria innocua serovar 6a (strain ATCC BAA-680 / CLIP 11262) protein is Large ribosomal subunit protein uL24.